The sequence spans 67 residues: Small ribosomal subunit protein bS21 (67 aa).

Belongs to the bacterial ribosomal protein bS21 family.

The protein is Small ribosomal subunit protein bS21 of Paramagnetospirillum magneticum (strain ATCC 700264 / AMB-1) (Magnetospirillum magneticum).